The following is a 400-amino-acid chain: Phosphoglycerate kinase (400 aa).

Residues 23–25 (DLN), arginine 38, 61–64 (HFGR), arginine 120, and arginine 153 each bind substrate. ATP-binding positions include lysine 203, glutamate 325, and 355 to 358 (GGDT).

Belongs to the phosphoglycerate kinase family. Monomer.

The protein localises to the cytoplasm. The enzyme catalyses (2R)-3-phosphoglycerate + ATP = (2R)-3-phospho-glyceroyl phosphate + ADP. The protein operates within carbohydrate degradation; glycolysis; pyruvate from D-glyceraldehyde 3-phosphate: step 2/5. The polypeptide is Phosphoglycerate kinase (Methylorubrum extorquens (strain CM4 / NCIMB 13688) (Methylobacterium extorquens)).